The sequence spans 323 residues: Ferrochelatase (323 aa).

Positions 196 and 277 each coordinate Fe cation.

This sequence belongs to the ferrochelatase family.

The protein resides in the cytoplasm. It catalyses the reaction heme b + 2 H(+) = protoporphyrin IX + Fe(2+). Its pathway is porphyrin-containing compound metabolism; protoheme biosynthesis; protoheme from protoporphyrin-IX: step 1/1. Catalyzes the ferrous insertion into protoporphyrin IX. The sequence is that of Ferrochelatase from Haemophilus influenzae (strain 86-028NP).